The following is a 297-amino-acid chain: MDARLLQLPWRSLRIADCIFMGKVCFTESSYALLLSDLSSMWCEEAKADIIQDRARELNKRLKAPVSSFLSYLSQIVFPVLNSKDNGQNIFSCHRSEAELLLQVKSQLSGLPFYWSFHCKEATVSTVCRHLVRPLKSMTEALESQNQELCLLLKKKDAEIQEYQDSGAVLTRDRLKTEVFDELKFQKSFLAEKVQGLCMSGKAPGFSEQLQQLYDAVIAPKAPTHPKEEDTGNSASHRPMAESSSISFEKTVPTQERTEGGAVSEPSQVPQSSVSCLTHRPPAGASKPKKKAKGLFM.

Residues 1 to 131 are globular head; that stretch reads MDARLLQLPW…ATVSTVCRHL (131 aa). A C-terminal tail region spans residues 220–286; that stretch reads PKAPTHPKEE…LTHRPPAGAS (67 aa). A disordered region spans residues 222–297; sequence APTHPKEEDT…PKKKAKGLFM (76 aa). The segment covering 232–255 has biased composition (polar residues); that stretch reads GNSASHRPMAESSSISFEKTVPTQ. The span at 263–286 shows a compositional bias: low complexity; it reads VSEPSQVPQSSVSCLTHRPPAGAS. An XLM motif is present at residues 287–297; that stretch reads KPKKKAKGLFM. Positions 287-297 are enriched in basic residues; that stretch reads KPKKKAKGLFM.

Belongs to the XRCC4-XLF family. XLF subfamily. As to quaternary structure, homodimer. Interacts with xrcc4; the interaction is direct and is mediated via a head-to-head interaction between N-terminal head regions. Component of the core long-range non-homologous end joining (NHEJ) complex (also named DNA-PK complex) composed of prkdc/DNA-PKcs, lig4, xrcc4, xrcc6/Ku70, xrcc5/Ku80 and nhej1/xlf.

Its subcellular location is the nucleus. Its function is as follows. DNA repair protein involved in DNA non-homologous end joining (NHEJ); required for double-strand break (DSB) repair and V(D)J recombination. It is also involved in telomere maintenance. Plays a key role in NHEJ by promoting the ligation of various mismatched and non-cohesive ends. In some studies, has been shown to associate with xrcc4 to form alternating helical filaments that bridge DNA and act like a bandage, holding together the broken DNA until it is repaired. Alternatively, it has also been shown that rather than forming filaments, a single nhej1 dimer interacts through both head domains with xrcc4 to promote the close alignment of DNA ends. The xrcc4-nhej1/xlf subcomplex binds to the DNA fragments of a DSB in a highly diffusive manner and robustly bridges two independent DNA molecules, holding the broken DNA fragments in close proximity to one other. The mobility of the bridges ensures that the ends remain accessible for further processing by other repair factors. The chain is Non-homologous end-joining factor 1 from Xenopus laevis (African clawed frog).